A 168-amino-acid chain; its full sequence is Peptide deformylase (168 aa).

The Fe cation site is built by Cys-92 and His-134. Glu-135 is a catalytic residue. His-138 is a Fe cation binding site.

This sequence belongs to the polypeptide deformylase family. Fe(2+) serves as cofactor.

The enzyme catalyses N-terminal N-formyl-L-methionyl-[peptide] + H2O = N-terminal L-methionyl-[peptide] + formate. Removes the formyl group from the N-terminal Met of newly synthesized proteins. Requires at least a dipeptide for an efficient rate of reaction. N-terminal L-methionine is a prerequisite for activity but the enzyme has broad specificity at other positions. The sequence is that of Peptide deformylase from Azotobacter vinelandii (strain DJ / ATCC BAA-1303).